We begin with the raw amino-acid sequence, 832 residues long: Translation initiation factor IF-2 (832 aa).

Residues 1-10 (MLMSDVEKFG) show a composition bias toward basic and acidic residues. Disordered regions lie at residues 1–87 (MLMS…SRSA), 120–148 (RDEE…PAAA), and 163–201 (IAPG…GGGG). The span at 11-20 (GDCGSSGGSG) shows a compositional bias: gly residues. Polar residues-rich tracts occupy residues 29-42 (RAST…STGG) and 71-87 (SPYT…SRSA). Residues 331–500 (PRPPVVTVMG…LLLAEMLELR (170 aa)) enclose the tr-type G domain. The tract at residues 340-347 (GHVDHGKT) is G1. GTP is bound at residue 340 to 347 (GHVDHGKT). Residues 365–369 (GITQH) are G2. The segment at 386 to 389 (DTPG) is G3. GTP is bound by residues 386–390 (DTPGH) and 440–443 (NKID). Positions 440–443 (NKID) are G4. The interval 476 to 478 (SAK) is G5.

Belongs to the TRAFAC class translation factor GTPase superfamily. Classic translation factor GTPase family. IF-2 subfamily.

The protein resides in the cytoplasm. Its function is as follows. One of the essential components for the initiation of protein synthesis. Protects formylmethionyl-tRNA from spontaneous hydrolysis and promotes its binding to the 30S ribosomal subunits. Also involved in the hydrolysis of GTP during the formation of the 70S ribosomal complex. The polypeptide is Translation initiation factor IF-2 (Anaplasma marginale (strain St. Maries)).